The primary structure comprises 192 residues: Inosine triphosphate pyrophosphatase (192 aa).

10 to 15 (TGNANK) lines the ITP pocket. E46 is a Mg(2+) binding site. Residues K58, 74-75 (DT), K91, 149-152 (FGWD), K172, and 177-178 (HR) each bind ITP.

It belongs to the HAM1 NTPase family. As to quaternary structure, homodimer. Mg(2+) serves as cofactor. Requires Mn(2+) as cofactor.

The protein localises to the cytoplasm. It localises to the nucleus. It carries out the reaction ITP + H2O = IMP + diphosphate + H(+). The enzyme catalyses dITP + H2O = dIMP + diphosphate + H(+). It catalyses the reaction XTP + H2O = XMP + diphosphate + H(+). In terms of biological role, pyrophosphatase that hydrolyzes non-canonical purine nucleotides such as inosine triphosphate (ITP), deoxyinosine triphosphate (dITP) or xanthosine 5'-triphosphate (XTP) to their respective monophosphate derivatives. The enzyme does not distinguish between the deoxy- and ribose forms. Probably excludes non-canonical purines from RNA and DNA precursor pools, thus preventing their incorporation into RNA and DNA and avoiding chromosomal lesions. The polypeptide is Inosine triphosphate pyrophosphatase (Puccinia graminis f. sp. tritici (strain CRL 75-36-700-3 / race SCCL) (Black stem rust fungus)).